Reading from the N-terminus, the 466-residue chain is Alpha-galacturonidase (466 aa).

11 to 78 contacts NAD(+); it reads VKIAYIGGGS…GKWNYETANT (68 aa). Asn-157 contributes to the substrate binding site. Cys-179 serves as a coordination point for Mn(2+). His-180 serves as the catalytic Proton donor. A Mn(2+)-binding site is contributed by His-216.

The protein belongs to the glycosyl hydrolase 4 family. In terms of assembly, homotetramer. It depends on NAD(+) as a cofactor. Requires Mn(2+) as cofactor.

The catalysed reaction is [(1-&gt;4)-alpha-D-galacturonosyl](n) + H2O = alpha-D-galacturonate + [(1-&gt;4)-alpha-D-galacturonosyl](n-1). In terms of biological role, alpha-galacturonidase able to catalyze the hydrolysis of the chromogenic substrate p-nitrophenyl-alpha-D-galacturonic acid (pNPalphaGalUA). It is probable that alpha-1,4-di-galacturonate (GalUA(2)) is the naturally occurring substrate. In Lachnoclostridium phytofermentans (strain ATCC 700394 / DSM 18823 / ISDg) (Clostridium phytofermentans), this protein is Alpha-galacturonidase.